Reading from the N-terminus, the 134-residue chain is UPF0412 protein YaaI (134 aa).

A signal peptide spans 1–23 (MKSVFTLSASLAISLMLCCTAQA).

It belongs to the UPF0412 family.

In Escherichia coli O17:K52:H18 (strain UMN026 / ExPEC), this protein is UPF0412 protein YaaI.